Reading from the N-terminus, the 238-residue chain is Cysteine-rich venom protein pseudecin (238 aa).

The N-terminal stretch at 1 to 19 (MIAFIVLLSLAAVLQQSSG) is a signal peptide. Residues 20 to 28 (TVDFASESS) constitute a propeptide that is removed on maturation. Residues 38–164 (VDKHNALRRS…SSKYLYVCQY (127 aa)) enclose the SCP domain. The Zn(2+) site is built by Thr-51 and Ser-106. 8 disulfides stabilise this stretch: Cys-75–Cys-153, Cys-92–Cys-165, Cys-148–Cys-162, Cys-184–Cys-191, Cys-187–Cys-196, Cys-200–Cys-233, Cys-209–Cys-227, and Cys-218–Cys-231. The 34-residue stretch at 200-233 (CNYNNDFSNCKSLAKKSKCQTEWIKKKCPASCFC) folds into the ShKT domain.

In terms of tissue distribution, expressed by the venom gland.

The protein resides in the secreted. Its function is as follows. Blocks olfactory (CNGA2) and retinal (CNGA1) CNG channel currents. Is really less potent that Pseudechetoxin. Does not affect neither depolarization- nor caffeine-induced contraction of smooth muscle. This is Cysteine-rich venom protein pseudecin from Pseudechis porphyriacus (Red-bellied black snake).